The sequence spans 49 residues: Large ribosomal subunit protein bL33 (49 aa).

This sequence belongs to the bacterial ribosomal protein bL33 family.

The protein is Large ribosomal subunit protein bL33 of Clostridium perfringens (strain ATCC 13124 / DSM 756 / JCM 1290 / NCIMB 6125 / NCTC 8237 / Type A).